We begin with the raw amino-acid sequence, 335 residues long: Tetraacyldisaccharide 4'-kinase (335 aa).

58–65 (TVGGSGKT) contacts ATP.

It belongs to the LpxK family.

It carries out the reaction a lipid A disaccharide + ATP = a lipid IVA + ADP + H(+). It functions in the pathway glycolipid biosynthesis; lipid IV(A) biosynthesis; lipid IV(A) from (3R)-3-hydroxytetradecanoyl-[acyl-carrier-protein] and UDP-N-acetyl-alpha-D-glucosamine: step 6/6. In terms of biological role, transfers the gamma-phosphate of ATP to the 4'-position of a tetraacyldisaccharide 1-phosphate intermediate (termed DS-1-P) to form tetraacyldisaccharide 1,4'-bis-phosphate (lipid IVA). The sequence is that of Tetraacyldisaccharide 4'-kinase from Shewanella sp. (strain ANA-3).